Reading from the N-terminus, the 292-residue chain is GTP cyclohydrolase FolE2 (292 aa).

The protein belongs to the GTP cyclohydrolase IV family.

It catalyses the reaction GTP + H2O = 7,8-dihydroneopterin 3'-triphosphate + formate + H(+). It participates in cofactor biosynthesis; 7,8-dihydroneopterin triphosphate biosynthesis; 7,8-dihydroneopterin triphosphate from GTP: step 1/1. In terms of biological role, converts GTP to 7,8-dihydroneopterin triphosphate. This chain is GTP cyclohydrolase FolE2, found in Staphylococcus epidermidis (strain ATCC 35984 / DSM 28319 / BCRC 17069 / CCUG 31568 / BM 3577 / RP62A).